The sequence spans 424 residues: MNLSILAALALVSFSTASTEQQSPLFSHADRSPKSIIDASPFLSLHRDLVSIPSVSGNESAVGEFLASFLESHNFNVIKQPVEGRTSRFNVFAYPSSAPSKPSILLTSHIDTVPPFIPYSVQYSDNERDIVISGRGCDDAKGSVAAQVVAALETLAENPSAPLALLFVVDEEVGGAGMRAFSFNTTLNPSPDSPSSLVDGYKTIIFGEPTDLALVSGHKGMLSFHVHVTGKSSHSGYPWLGESALSTILPALSVIDKLGDIPVEKGGLPSSEKYGRTTVNIGRVEAGVAGNVVPAAADADVTVRLAAGTPEEAMDIVLAAVANATGDNPHVVVKFAEGPNGGVGGYAPQDLDTDVPGFEITTVNYGTDVPNLKVYEENDVKRYLYGPGSIHVAHGDHESITVAQLEEAVKGYKKLITAALERIY.

The first 17 residues, 1 to 17 (MNLSILAALALVSFSTA), serve as a signal peptide directing secretion. N-linked (GlcNAc...) asparagine glycosylation is present at N58. D139 contacts Zn(2+). E171 serves as the catalytic Proton acceptor. E172 lines the Zn(2+) pocket. N-linked (GlcNAc...) asparagine glycosylation is found at N184 and N323.

It belongs to the peptidase M20A family. Requires Zn(2+) as cofactor.

The protein resides in the secreted. The chain is Probable carboxypeptidase AN5749 from Emericella nidulans (strain FGSC A4 / ATCC 38163 / CBS 112.46 / NRRL 194 / M139) (Aspergillus nidulans).